Here is a 166-residue protein sequence, read N- to C-terminus: ATP synthase subunit b (166 aa).

Residues 15-37 (TLYYLLIFAALLLLVKHFAWGPV) form a helical membrane-spanning segment.

The protein belongs to the ATPase B chain family. F-type ATPases have 2 components, F(1) - the catalytic core - and F(0) - the membrane proton channel. F(1) has five subunits: alpha(3), beta(3), gamma(1), delta(1), epsilon(1). F(0) has three main subunits: a(1), b(2) and c(10-14). The alpha and beta chains form an alternating ring which encloses part of the gamma chain. F(1) is attached to F(0) by a central stalk formed by the gamma and epsilon chains, while a peripheral stalk is formed by the delta and b chains.

The protein resides in the cell membrane. F(1)F(0) ATP synthase produces ATP from ADP in the presence of a proton or sodium gradient. F-type ATPases consist of two structural domains, F(1) containing the extramembraneous catalytic core and F(0) containing the membrane proton channel, linked together by a central stalk and a peripheral stalk. During catalysis, ATP synthesis in the catalytic domain of F(1) is coupled via a rotary mechanism of the central stalk subunits to proton translocation. In terms of biological role, component of the F(0) channel, it forms part of the peripheral stalk, linking F(1) to F(0). The protein is ATP synthase subunit b of Lactobacillus gasseri (strain ATCC 33323 / DSM 20243 / BCRC 14619 / CIP 102991 / JCM 1131 / KCTC 3163 / NCIMB 11718 / NCTC 13722 / AM63).